The chain runs to 436 residues: Glutamate-1-semialdehyde 2,1-aminomutase (436 aa).

K272 carries the post-translational modification N6-(pyridoxal phosphate)lysine.

The protein belongs to the class-III pyridoxal-phosphate-dependent aminotransferase family. HemL subfamily. Homodimer. The cofactor is pyridoxal 5'-phosphate.

It is found in the cytoplasm. The catalysed reaction is (S)-4-amino-5-oxopentanoate = 5-aminolevulinate. Its pathway is porphyrin-containing compound metabolism; protoporphyrin-IX biosynthesis; 5-aminolevulinate from L-glutamyl-tRNA(Glu): step 2/2. It participates in porphyrin-containing compound metabolism; chlorophyll biosynthesis. The polypeptide is Glutamate-1-semialdehyde 2,1-aminomutase (Methylibium petroleiphilum (strain ATCC BAA-1232 / LMG 22953 / PM1)).